The sequence spans 406 residues: Tubby-like F-box protein 3 (406 aa).

In terms of domain architecture, F-box spans 50 to 105; sequence SCWASMPPELLRDVLMRIEQSEDTWPSRKNVVSCAGVCRNWREIVKEIVRVPELSS.

Belongs to the TUB family. In terms of tissue distribution, ubiquitous at low levels. Not detected in mature siliques.

It is found in the cell membrane. The protein localises to the plastid. Its subcellular location is the nucleus. It localises to the nucleoplasm. The protein resides in the cytoplasm. Functionally, involved in abiotic stress signaling. Tethered to plasma membrane (PM) and probably bound to phosphatidylinositol 4,5-bisphosphate. Abiotic stresses (drought, salt, H(2)O(2)) trigger phospholipase C mediated PM dislogement and plastidial and nucleocytosolic relocation of TULP3. This is Tubby-like F-box protein 3 from Arabidopsis thaliana (Mouse-ear cress).